Here is a 417-residue protein sequence, read N- to C-terminus: CinA-like protein (417 aa).

Belongs to the CinA family.

This chain is CinA-like protein, found in Gloeothece citriformis (strain PCC 7424) (Cyanothece sp. (strain PCC 7424)).